Here is a 327-residue protein sequence, read N- to C-terminus: FERM domain-containing protein 6 (327 aa).

Residues 16–320 (RRVCIFLPND…NSHRLYMNLQ (305 aa)) form the FERM domain.

It is found in the cytoplasm. Its subcellular location is the cell membrane. The polypeptide is FERM domain-containing protein 6 (Frmd6) (Rattus norvegicus (Rat)).